The following is a 360-amino-acid chain: Secreted LysM effector LysM2 (360 aa).

A signal peptide spans 1 to 21 (MKISSLSILPLLGVVSAGIHG). Residues 37–85 (TWYLDLVDDSYTCENIESQWDLSHEAFVAWNPGVKKDCSGLKVGLSVCV) enclose the LysM 1 domain. The segment covering 94-113 (ATPTSEASTSSETSSASPTA) has biased composition (low complexity). Residues 94–125 (ATPTSEASTSSETSSASPTASRPPLPSPTQDG) are disordered. N-linked (GlcNAc...) asparagine glycosylation is present at Asn129. The region spanning 132-179 (KFHQAVSGDTCSKIISRYKPITLDQFIEWNPALEKDCSGLWSGYYYCV) is the LysM 2 domain. N-linked (GlcNAc...) asparagine glycosylation occurs at Asn204. 2 consecutive LysM domains span residues 225 to 272 (RWHK…YYCI) and 311 to 357 (KWHQ…YVCV).

The protein belongs to the secreted LysM effector family.

It localises to the secreted. The protein resides in the cell wall. In terms of biological role, secreted effector that binds two substrates, chitin and N-linked oligosaccharides associated with human skin glycoproteins. Could provide the pathogen with three important functions including shielding host cell wall chitin from the human immune system, shielding the pathogen's glycoproteins from host degradation and immune surveillance, and helping facilitate pathogen adhesion to human skin. This Trichophyton rubrum (strain ATCC MYA-4607 / CBS 118892) (Athlete's foot fungus) protein is Secreted LysM effector LysM2.